The following is a 458-amino-acid chain: Phosphoglucosamine mutase (458 aa).

Ser108 functions as the Phosphoserine intermediate in the catalytic mechanism. Residues Ser108, Asp247, Asp249, and Asp251 each contribute to the Mg(2+) site. Ser108 bears the Phosphoserine mark.

This sequence belongs to the phosphohexose mutase family. It depends on Mg(2+) as a cofactor. In terms of processing, activated by phosphorylation.

It catalyses the reaction alpha-D-glucosamine 1-phosphate = D-glucosamine 6-phosphate. In terms of biological role, catalyzes the conversion of glucosamine-6-phosphate to glucosamine-1-phosphate. The protein is Phosphoglucosamine mutase of Thiobacillus denitrificans (strain ATCC 25259 / T1).